We begin with the raw amino-acid sequence, 148 residues long: Deoxyuridine 5'-triphosphate nucleotidohydrolase (148 aa).

Substrate contacts are provided by residues 67–69, N80, 84–86, and M94; these read RSG and LID.

It belongs to the dUTPase family. The cofactor is Mg(2+).

It catalyses the reaction dUTP + H2O = dUMP + diphosphate + H(+). It participates in pyrimidine metabolism; dUMP biosynthesis; dUMP from dCTP (dUTP route): step 2/2. Its function is as follows. This enzyme is involved in nucleotide metabolism: it produces dUMP, the immediate precursor of thymidine nucleotides and it decreases the intracellular concentration of dUTP so that uracil cannot be incorporated into DNA. The chain is Deoxyuridine 5'-triphosphate nucleotidohydrolase from Paraburkholderia phytofirmans (strain DSM 17436 / LMG 22146 / PsJN) (Burkholderia phytofirmans).